A 141-amino-acid chain; its full sequence is ATP synthase epsilon chain (141 aa).

Belongs to the ATPase epsilon chain family. In terms of assembly, F-type ATPases have 2 components, CF(1) - the catalytic core - and CF(0) - the membrane proton channel. CF(1) has five subunits: alpha(3), beta(3), gamma(1), delta(1), epsilon(1). CF(0) has three main subunits: a, b and c.

It is found in the cell inner membrane. Functionally, produces ATP from ADP in the presence of a proton gradient across the membrane. The polypeptide is ATP synthase epsilon chain (Teredinibacter turnerae (strain ATCC 39867 / T7901)).